Reading from the N-terminus, the 287-residue chain is Glucose uptake protein GlcU (287 aa).

8 consecutive transmembrane segments (helical) span residues 4–26, 38–60, 110–132, 153–175, 180–197, 210–227, 232–254, and 261–283; these read LLAL…LGGG, ALIV…IFIV, WSTP…GIIL, ILIL…LFNV, ALLP…VLTY, ILPG…FISQ, VATS…IFIL, and RQLI…LGIA.

It belongs to the GRP transporter (TC 2.A.7.5) family.

Its subcellular location is the cell membrane. In terms of biological role, involved in the uptake of glucose. The protein is Glucose uptake protein GlcU (glcU) of Bacillus subtilis (strain 168).